The chain runs to 154 residues: uncharacterized protein (154 aa).

2 consecutive transmembrane segments (helical) span residues 54 to 74 and 81 to 101; these read FLITNLIFFFAAFVALLIYLL and FAFVFIAAIIFIIFYNIFFLS.

It localises to the cell membrane. This is an uncharacterized protein from Mycoplasma genitalium (strain ATCC 33530 / DSM 19775 / NCTC 10195 / G37) (Mycoplasmoides genitalium).